We begin with the raw amino-acid sequence, 104 residues long: Iron-sulfur cluster assembly protein CyaY (104 aa).

It belongs to the frataxin family.

In terms of biological role, involved in iron-sulfur (Fe-S) cluster assembly. May act as a regulator of Fe-S biogenesis. The polypeptide is Iron-sulfur cluster assembly protein CyaY (Aliivibrio salmonicida (strain LFI1238) (Vibrio salmonicida (strain LFI1238))).